The chain runs to 546 residues: Mitochondrial distribution and morphology protein 34 (546 aa).

Positions 1-195 (MAFNFNWSPL…LPAIIHRLSL (195 aa)) constitute an SMP-LTD domain. 5 disordered regions span residues 208-230 (EVKA…QDPV), 299-319 (SHGG…SHVA), 344-382 (TMGA…CTDS), 395-416 (SSSA…SPDA), and 517-546 (RRIQ…AYGQ). Residues 349-362 (RHPRTRPSRKHKRR) show a composition bias toward basic residues. The segment covering 363 to 374 (VVDLRKPQKLDD) has biased composition (basic and acidic residues).

It belongs to the MDM34 family. As to quaternary structure, component of the ER-mitochondria encounter structure (ERMES) or MDM complex, composed of MMM1, MDM10, MDM12 and MDM34.

Its subcellular location is the mitochondrion outer membrane. Its function is as follows. Component of the ERMES/MDM complex, which serves as a molecular tether to connect the endoplasmic reticulum (ER) and mitochondria. Components of this complex are involved in the control of mitochondrial shape and protein biogenesis, and function in nonvesicular lipid trafficking between the ER and mitochondria. MDM34 is required for the interaction of the ER-resident membrane protein MMM1 and the outer mitochondrial membrane-resident beta-barrel protein MDM10. In Arthroderma otae (strain ATCC MYA-4605 / CBS 113480) (Microsporum canis), this protein is Mitochondrial distribution and morphology protein 34.